The primary structure comprises 857 residues: DNA gyrase subunit A (857 aa).

The region spanning 39–507 is the Topo IIA-type catalytic domain; it reads LPDVRDGLKP…YEGDMSIEDL (469 aa). Tyr127 acts as the O-(5'-phospho-DNA)-tyrosine intermediate in catalysis. The short motif at 534 to 540 is the GyrA-box element; the sequence is QKRGGKG. A disordered region spans residues 825 to 857; the sequence is REAEEVDGDVAVDETAEGAATTGTDEGEAPSAE. A compositionally biased stretch (acidic residues) spans 828-840; the sequence is EEVDGDVAVDETA.

Belongs to the type II topoisomerase GyrA/ParC subunit family. As to quaternary structure, heterotetramer, composed of two GyrA and two GyrB chains. In the heterotetramer, GyrA contains the active site tyrosine that forms a transient covalent intermediate with DNA, while GyrB binds cofactors and catalyzes ATP hydrolysis.

It is found in the cytoplasm. It carries out the reaction ATP-dependent breakage, passage and rejoining of double-stranded DNA.. Functionally, a type II topoisomerase that negatively supercoils closed circular double-stranded (ds) DNA in an ATP-dependent manner to modulate DNA topology and maintain chromosomes in an underwound state. Negative supercoiling favors strand separation, and DNA replication, transcription, recombination and repair, all of which involve strand separation. Also able to catalyze the interconversion of other topological isomers of dsDNA rings, including catenanes and knotted rings. Type II topoisomerases break and join 2 DNA strands simultaneously in an ATP-dependent manner. The polypeptide is DNA gyrase subunit A (Streptomyces coelicolor (strain ATCC BAA-471 / A3(2) / M145)).